The following is a 98-amino-acid chain: DNA-binding protein Fis (98 aa).

Positions 74–93 (QTRAATMLGINRGTLRKKLK) form a DNA-binding region, H-T-H motif.

This sequence belongs to the transcriptional regulatory Fis family. As to quaternary structure, homodimer.

In terms of biological role, activates ribosomal RNA transcription. Plays a direct role in upstream activation of rRNA promoters. The chain is DNA-binding protein Fis from Mannheimia haemolytica (Pasteurella haemolytica).